The sequence spans 273 residues: uncharacterized protein (273 aa).

A helical membrane pass occupies residues 7–27; sequence LTLGICLVLLIILIVGYVIMT.

The protein belongs to the staphylococcal tandem lipoprotein family.

It localises to the cell membrane. This is an uncharacterized protein from Staphylococcus aureus (strain MSSA476).